The sequence spans 523 residues: 2-isopropylmalate synthase (523 aa).

Residues 5–267 (VIIFDTTLRD…HTAINHQEIW (263 aa)) enclose the Pyruvate carboxyltransferase domain. Positions 14, 202, 204, and 238 each coordinate Mn(2+). Residues 392 to 523 (RLDYFSVQSS…QHNENNKETV (132 aa)) form a regulatory domain region.

The protein belongs to the alpha-IPM synthase/homocitrate synthase family. LeuA type 1 subfamily. As to quaternary structure, homodimer. Requires Mn(2+) as cofactor.

It is found in the cytoplasm. The catalysed reaction is 3-methyl-2-oxobutanoate + acetyl-CoA + H2O = (2S)-2-isopropylmalate + CoA + H(+). It functions in the pathway amino-acid biosynthesis; L-leucine biosynthesis; L-leucine from 3-methyl-2-oxobutanoate: step 1/4. In terms of biological role, catalyzes the condensation of the acetyl group of acetyl-CoA with 3-methyl-2-oxobutanoate (2-ketoisovalerate) to form 3-carboxy-3-hydroxy-4-methylpentanoate (2-isopropylmalate). This is 2-isopropylmalate synthase from Shigella dysenteriae serotype 1 (strain Sd197).